The sequence spans 370 residues: Aspartate-semialdehyde dehydrogenase 1 (370 aa).

NADP(+)-binding positions include 9 to 12 (RGMV), 36 to 37 (TS), and Gln72. Phosphate is bound at residue Arg101. The active-site Acyl-thioester intermediate is the Cys134. Cys134 is modified (S-cysteinyl cysteine; in inhibited form). Gln161 is a substrate binding site. NADP(+)-binding positions include 164-165 (SG) and Pro192. Substrate is bound at residue Glu240. Lys243 provides a ligand contact to phosphate. Arg267 provides a ligand contact to substrate. The active-site Proton acceptor is His274. Residue Gln350 participates in NADP(+) binding.

This sequence belongs to the aspartate-semialdehyde dehydrogenase family. Homodimer.

The catalysed reaction is L-aspartate 4-semialdehyde + phosphate + NADP(+) = 4-phospho-L-aspartate + NADPH + H(+). The protein operates within amino-acid biosynthesis; L-lysine biosynthesis via DAP pathway; (S)-tetrahydrodipicolinate from L-aspartate: step 2/4. It functions in the pathway amino-acid biosynthesis; L-methionine biosynthesis via de novo pathway; L-homoserine from L-aspartate: step 2/3. Its pathway is amino-acid biosynthesis; L-threonine biosynthesis; L-threonine from L-aspartate: step 2/5. With respect to regulation, inhibited by S-methyl-L-cysteine sulfoxide in vitro, via the formation of a covalently bound cysteine at the active site Cys-134. Catalyzes the NADPH-dependent formation of L-aspartate-semialdehyde (L-ASA) by the reductive dephosphorylation of L-aspartyl-4-phosphate. The protein is Aspartate-semialdehyde dehydrogenase 1 (asd1) of Vibrio cholerae serotype O1 (strain ATCC 39315 / El Tor Inaba N16961).